A 130-amino-acid chain; its full sequence is MAQVQFYGTGRRKNAIARVRLVPGEGRIIVNNRPLNEYFGQKILEMLVRQPLEVTDMAGRFDVLARVEGGGTTGQAGAIRLGIARALLQADGDLRPVLKRNGFLTRDPRMKERRKYGLKKARKAPQFSKR.

The tract at residues 104-130 is disordered; the sequence is LTRDPRMKERRKYGLKKARKAPQFSKR. Over residues 111–130 the composition is skewed to basic residues; it reads KERRKYGLKKARKAPQFSKR.

It belongs to the universal ribosomal protein uS9 family.

This chain is Small ribosomal subunit protein uS9, found in Moorella thermoacetica (strain ATCC 39073 / JCM 9320).